Consider the following 188-residue polypeptide: Putative manganese efflux pump MntP (188 aa).

Transmembrane regions (helical) follow at residues 3–23, 41–61, 62–82, 107–129, 143–163, and 168–188; these read LSAT…ASIG, LIFG…GMLA, SQFV…FLGG, LLVT…LAFL, ATFL…PLLG, and ILGG…HFAG.

Belongs to the MntP (TC 9.B.29) family.

It is found in the cell inner membrane. Functionally, probably functions as a manganese efflux pump. The protein is Putative manganese efflux pump MntP of Klebsiella pneumoniae (strain 342).